Here is a 158-residue protein sequence, read N- to C-terminus: Salt stress-responsive protein YocM (158 aa).

Residues 51–158 (GKGDASFPSM…GQAKTIVIDD (108 aa)) enclose the sHSP domain.

Belongs to the small heat shock protein (HSP20) family. As to quaternary structure, forms homodimers, homotetramers and higher oligomers.

It is found in the cytoplasm. In terms of biological role, part of the cellular protein quality control system with a specific role in salt stress response. May facilitate protein homeostasis, together with chemical chaperones that accumulate during the salt stress response. Increased levels of YocM protects against both heat and salt stress. In vitro, displays an unusual aggregase chaperone activity. The chain is Salt stress-responsive protein YocM (yocM) from Bacillus subtilis (strain 168).